Consider the following 192-residue polypeptide: uncharacterized protein (192 aa).

The Nudix hydrolase domain maps to 29-160 (QRQAAVLVPI…PLDIHRRGND (132 aa)). The short motif at 67–89 (GAVDNTDATLIAAALREAQEEVA) is the Nudix box element. Mg(2+)-binding residues include E83 and E87.

It belongs to the Nudix hydrolase family. PCD1 subfamily. Mn(2+) is required as a cofactor. It depends on Mg(2+) as a cofactor.

Probably mediates the hydrolysis of some nucleoside diphosphate derivatives. This is an uncharacterized protein from Klebsiella pneumoniae subsp. pneumoniae (strain ATCC 700721 / MGH 78578).